We begin with the raw amino-acid sequence, 270 residues long: Replication protein A 32 kDa subunit (270 aa).

Met1 bears the N-acetylmethionine mark. 2 positions are modified to phosphoserine; by PRKDC: Ser4 and Ser8. A Phosphothreonine; by PRKDC modification is found at Thr21. A disordered region spans residues Thr21–Arg40. Ser23 carries the post-translational modification Phosphoserine; by CDK2. The residue at position 29 (Ser29) is a Phosphoserine; by CDK1. Ser33 carries the post-translational modification Phosphoserine; by PRKDC. Glycyl lysine isopeptide (Lys-Gly) (interchain with G-Cter in ubiquitin) cross-links involve residues Lys37 and Lys38. The OB DNA-binding region spans Val74–Pro148. The interval Gly187–Glu270 is interaction with RAD52, TIPIN, UNG and XPA.

It belongs to the replication factor A protein 2 family. As to quaternary structure, component of the replication protein A complex (RPA/RP-A), a heterotrimeric complex composed of RPA1, RPA2 and RPA3. Interacts with PRPF19; the PRP19-CDC5L complex is recruited to the sites of DNA repair where it ubiquitinates the replication protein A complex (RPA). Interacts with SERTAD3. Interacts with TIPIN. Interacts with TIMELESS. Interacts with PPP4R2; the interaction is direct, DNA damage-dependent and mediates the recruitment of the PP4 catalytic subunit PPP4C. Interacts (hyperphosphorylated) with RAD51. Interacts with SMARCAL1; the interaction is direct and mediates the recruitment to the RPA complex of SMARCAL1. Interacts with RAD52 and XPA; those interactions are direct and associate RAD52 and XPA to the RPA complex. Interacts with FBH1. Interacts with ETAA1; the interaction is direct and promotes ETAA1 recruitment at stalled replication forks. Interacts with DDI2. Interacts (in unphosphorylated form via N-terminus) with EIF4EBP3; the interaction enhances EIF4EBP3-mediated inhibition of EIF4E-mediated mRNA nuclear export. Differentially phosphorylated throughout the cell cycle, becoming phosphorylated at the G1-S transition and dephosphorylated in late mitosis. Mainly phosphorylated at Ser-23 and Ser-29, by cyclin A-CDK2 and cyclin B-CDK1, respectively during DNA replication and mitosis. Dephosphorylation may require the serine/threonine-protein phosphatase 4. Phosphorylation at Ser-23 and Ser-29 is a prerequisite for further phosphorylation. Becomes hyperphosphorylated on additional residues including Ser-4, Ser-8, Thr-21 and Ser-33 in response to DNA damage. Hyperphosphorylation is mediated by ATM, ATR and PRKDC. Primarily recruited to DNA repair nuclear foci as a hypophosphorylated form it undergoes subsequent hyperphosphorylation, catalyzed by ATR. Hyperphosphorylation is required for RAD51 recruitment to chromatin and efficient DNA repair. Phosphorylation at Thr-21 depends upon RFWD3 presence. In terms of processing, DNA damage-induced 'Lys-63'-linked polyubiquitination by PRPF19 mediates ATRIP recruitment to the RPA complex at sites of DNA damage and activation of ATR. Ubiquitinated by RFWD3 at stalled replication forks in response to DNA damage: ubiquitination by RFWD3 does not lead to degradation by the proteasome and promotes removal of the RPA complex from stalled replication forks, promoting homologous recombination.

It is found in the nucleus. It localises to the PML body. Functionally, as part of the heterotrimeric replication protein A complex (RPA/RP-A), binds and stabilizes single-stranded DNA intermediates, that form during DNA replication or upon DNA stress. It prevents their reannealing and in parallel, recruits and activates different proteins and complexes involved in DNA metabolism. Thereby, it plays an essential role both in DNA replication and the cellular response to DNA damage. In the cellular response to DNA damage, the RPA complex controls DNA repair and DNA damage checkpoint activation. Through recruitment of ATRIP activates the ATR kinase a master regulator of the DNA damage response. It is required for the recruitment of the DNA double-strand break repair factors RAD51 and RAD52 to chromatin in response to DNA damage. Also recruits to sites of DNA damage proteins like XPA and XPG that are involved in nucleotide excision repair and is required for this mechanism of DNA repair. Also plays a role in base excision repair (BER) probably through interaction with UNG. Also recruits SMARCAL1/HARP, which is involved in replication fork restart, to sites of DNA damage. May also play a role in telomere maintenance. The chain is Replication protein A 32 kDa subunit (RPA2) from Pongo abelii (Sumatran orangutan).